The chain runs to 366 residues: tRNA 2-selenouridine synthase (366 aa).

Positions Phe12 to His135 constitute a Rhodanese domain. Cys95 serves as the catalytic S-selanylcysteine intermediate.

It belongs to the SelU family. In terms of assembly, monomer.

It catalyses the reaction 5-methylaminomethyl-2-thiouridine(34) in tRNA + selenophosphate + (2E)-geranyl diphosphate + H2O + H(+) = 5-methylaminomethyl-2-selenouridine(34) in tRNA + (2E)-thiogeraniol + phosphate + diphosphate. It carries out the reaction 5-methylaminomethyl-2-thiouridine(34) in tRNA + (2E)-geranyl diphosphate = 5-methylaminomethyl-S-(2E)-geranyl-thiouridine(34) in tRNA + diphosphate. The catalysed reaction is 5-methylaminomethyl-S-(2E)-geranyl-thiouridine(34) in tRNA + selenophosphate + H(+) = 5-methylaminomethyl-2-(Se-phospho)selenouridine(34) in tRNA + (2E)-thiogeraniol. The enzyme catalyses 5-methylaminomethyl-2-(Se-phospho)selenouridine(34) in tRNA + H2O = 5-methylaminomethyl-2-selenouridine(34) in tRNA + phosphate. Functionally, involved in the post-transcriptional modification of the uridine at the wobble position (U34) of tRNA(Lys), tRNA(Glu) and tRNA(Gln). Catalyzes the conversion of 2-thiouridine (S2U-RNA) to 2-selenouridine (Se2U-RNA). Acts in a two-step process involving geranylation of 2-thiouridine (S2U) to S-geranyl-2-thiouridine (geS2U) and subsequent selenation of the latter derivative to 2-selenouridine (Se2U) in the tRNA chain. This chain is tRNA 2-selenouridine synthase, found in Pseudomonas savastanoi pv. phaseolicola (strain 1448A / Race 6) (Pseudomonas syringae pv. phaseolicola (strain 1448A / Race 6)).